The following is a 339-amino-acid chain: Longiborneol synthase CLM1 (339 aa).

The segment covering 1 to 17 has biased composition (polar residues); it reads MLATPTLSNFDKPSLPS. The disordered stretch occupies residues 1–21; sequence MLATPTLSNFDKPSLPSSEGG. Positions 112, 241, 245, and 249 each coordinate Mg(2+). The NDXXSXXXE magnesium-binding motif motif lies at 241-249; sequence NDVLSFYKE.

The protein belongs to the trichodiene synthase family. It depends on Mg(2+) as a cofactor. Requires Mn(2+) as cofactor.

It carries out the reaction (2E,6E)-farnesyl diphosphate + H2O = (-)-longiborneol + diphosphate. It participates in mycotoxin biosynthesis. In terms of biological role, terpene cyclase involved in the biosynthesis of culmorin, a tricyclic sesquiterpene diol reported to have antifungal activity and some phytotoxicity to wheat coleoptile tissue, contributing to Fusarium head blight disease. The terpene cyclase CLM1 is responsible for the cyclization of farnesyl diphosphate into the intermediate longiborneol. Longiborneol is then hydroxylated in a regio- and endo-stereoselective manner at position C-11 by the cytochrome P450 monooxygenase CLM2 to produce culmorin. Additional non-specific oxygenases are also able to hydroxylate longiborneol at other sites than C-11 leading to 3-hydroxylongiborneol, 5-hydroxylongiborneol, 12-hydroxylongiborneol and 15-hydroxylongiborneol. Moreover, another oxygenase capable of installing a C-11 exo-hydroxy group in longiborneol can also yield 11-epi-acetylculmorin. The production of these longiborneol derivatives is dwarfed by the high abundance of culmorin, suggesting that CLM2 displays superior enzymatic activity to the unidentified, possibly promiscuous, additional oxygenases. The sequence is that of Longiborneol synthase CLM1 from Gibberella zeae (strain ATCC MYA-4620 / CBS 123657 / FGSC 9075 / NRRL 31084 / PH-1) (Wheat head blight fungus).